The chain runs to 489 residues: Beta-glucosidase 14 (489 aa).

The signal sequence occupies residues 1-21 (MTSKYFSVLVFIILASNEVVA). Glutamine 49 contributes to the a beta-D-glucoside binding site. N-linked (GlcNAc...) asparagine glycosylation occurs at asparagine 80. A beta-D-glucoside-binding positions include histidine 153 and 198-199 (NE). Glutamate 199 serves as the catalytic Proton donor. A disulfide bond links cysteine 218 and cysteine 226. Asparagine 225 carries an N-linked (GlcNAc...) asparagine glycan. Tyrosine 343 provides a ligand contact to a beta-D-glucoside. Asparagine 357 carries an N-linked (GlcNAc...) asparagine glycan. A beta-D-glucoside is bound by residues glutamate 396, tryptophan 441, 448–449 (EW), and phenylalanine 457. Residue glutamate 396 is the Nucleophile of the active site.

Belongs to the glycosyl hydrolase 1 family.

It catalyses the reaction Hydrolysis of terminal, non-reducing beta-D-glucosyl residues with release of beta-D-glucose.. The sequence is that of Beta-glucosidase 14 from Arabidopsis thaliana (Mouse-ear cress).